Consider the following 74-residue polypeptide: MEIKYLLTVFLVLLIVSDHCQAFLFSLIPSAISGLISAFKGRRKRDLNGYIDHFKNFRKRDAELEELLSKLPIY.

Residues 1-22 (MEIKYLLTVFLVLLIVSDHCQA) form the signal peptide. The residue at position 40 (Lys-40) is a Lysine amide. A propeptide spanning residues 46 to 74 (DLNGYIDHFKNFRKRDAELEELLSKLPIY) is cleaved from the precursor.

The protein belongs to the non-disulfide-bridged peptide (NDBP) superfamily. Short antimicrobial peptide (group 4) family. In terms of tissue distribution, expressed by the venom gland.

Its subcellular location is the secreted. It is found in the target cell membrane. Functionally, has antibacterial activity against Gram-positive bacteria S.aureus, M.luteus, B.subtilis, and Gram-negative bacteria E.coli, and P.aeruginosa. This is Peptide BmKb1 from Olivierus martensii (Manchurian scorpion).